The primary structure comprises 450 residues: Homogentisate 1,2-dioxygenase (450 aa).

The active-site Proton acceptor is His-304. Fe cation contacts are provided by His-347 and Glu-353. Residues Tyr-362 and His-383 each contribute to the homogentisate site. His-383 lines the Fe cation pocket.

Belongs to the homogentisate dioxygenase family. As to quaternary structure, hexamer; dimer of trimers. Requires Fe cation as cofactor.

It carries out the reaction homogentisate + O2 = 4-maleylacetoacetate + H(+). It functions in the pathway amino-acid degradation; L-phenylalanine degradation; acetoacetate and fumarate from L-phenylalanine: step 4/6. In terms of biological role, involved in the catabolism of homogentisate (2,5-dihydroxyphenylacetate or 2,5-OH-PhAc), a central intermediate in the degradation of phenylalanine and tyrosine. Catalyzes the oxidative ring cleavage of the aromatic ring of homogentisate to yield maleylacetoacetate. The polypeptide is Homogentisate 1,2-dioxygenase (Burkholderia thailandensis (strain ATCC 700388 / DSM 13276 / CCUG 48851 / CIP 106301 / E264)).